Reading from the N-terminus, the 292-residue chain is MSILQILDNDVLRNIIDYLDLKDETAFVSTCQYLYYYRKTFRRIYRLEKIIVFKLKNPDHIIPENTTHLVVTFNQSIGKINIPKNVSRLTFCPQFNKSIDDIPSTITHLSLGAAFNGEVSNIPTSVTHLKLGVSFKRKLSEIPLSVTHLTLNSYDTEIHGPIPSTITHLAFAEDFNQSINGLVPNFVGHLRIRQYNSNLEIPNHIYHLSLNSYEYNKQNELPNYIKFLDIRYIFPVKYKFIPETVTHLSFGNWFNANITTIIPNITHLVIKSCYECLIKNKIPDNITHLILY.

The FNIP repeat unit spans residues 95-134; that stretch reads FNKSIDDIPSTITHLSLGAAFNGEVSNIPTSVTHLKLGVS.

The polypeptide is Putative FNIP repeat-containing protein L281 (Acanthamoeba polyphaga mimivirus (APMV)).